The chain runs to 227 residues: UPF0173 metal-dependent hydrolase Saci_1512 (227 aa).

The protein belongs to the UPF0173 family.

The protein is UPF0173 metal-dependent hydrolase Saci_1512 of Sulfolobus acidocaldarius (strain ATCC 33909 / DSM 639 / JCM 8929 / NBRC 15157 / NCIMB 11770).